An 86-amino-acid chain; its full sequence is uncharacterized protein (86 aa).

A helical transmembrane segment spans residues Ile12–Leu32.

The protein resides in the membrane. This is an uncharacterized protein from Escherichia coli (strain K12).